The following is a 1581-amino-acid chain: Maestro heat-like repeat-containing protein family member 2B (1581 aa).

HEAT repeat units follow at residues 123 to 160, 305 to 342, 401 to 441, 464 to 501, 526 to 543, 544 to 580, 658 to 695, 773 to 815, 960 to 997, 1017 to 1055, 1112 to 1150, 1153 to 1191, 1254 to 1291, 1295 to 1332, 1359 to 1379, and 1380 to 1416; these read FMMM…SIYK, ANPV…AEEP, MSNR…LVIG, DYLF…KLPS, AIGL…KLAE, MWKT…SLWK, ENHL…LTKT, TYKE…LKPA, CQEV…KFIP, PLCT…HMPV, KLMR…TGAH, HLYP…LGER, GVIL…EPIL, GNLR…GAPH, CESL…DINF, and YFKE…LTGR.

Found in a complex at least composed of MROH2B isoform 2, PRKACA isoform 2 and TCP11. Interacts with PRKACA isoform 2. Interacts with TCP11. Constitutively phosphorylated on serine and threonine residues in acrosomal region of the sperm head, midpiece and flagellar regions of noncapacitated spermatozoa. Phosphorylation on tyrosine residues increases upon sperm capacitation within the acrosomal and tail regions in a protein kinase A (PKA)-dependent signaling pathway. In terms of tissue distribution, expressed strongly in round spermatids and fully mature spermatozoa. Expressed weakly in pachytene spermatocytes (at protein level). Isoform 2 is specifically expressed in the testis. Isoform 2 is expressed in pachytene spermatocytes and round spermatids. Isoform 3 is weakly expressed in testis.

It localises to the cytoplasm. The protein localises to the cytoplasmic vesicle. It is found in the secretory vesicle. The protein resides in the acrosome. Its subcellular location is the cell projection. It localises to the cilium. The protein localises to the flagellum. In terms of biological role, may play a role in the process of sperm capacitation. This is Maestro heat-like repeat-containing protein family member 2B from Mus musculus (Mouse).